The chain runs to 266 residues: Protein SCO2 homolog, mitochondrial (266 aa).

The transit peptide at 1 to 41 (MLLLTRSPTAWHRLSQLKPRVLPGTLGGQALHLRSWLLSRQ) directs the protein to the mitochondrion. Residues 42–60 (GPAETGGQGQPQGPGLRTR) are Mitochondrial matrix-facing. The helical transmembrane segment at 61–78 (LLITGLFGAGLGGAWLAL) threads the bilayer. Over 79 to 266 (RAEKERLQQQ…HMAAFRSVLS (188 aa)) the chain is Mitochondrial intermembrane. The 175-residue stretch at 85-259 (LQQQKRTEAL…ISDSVRRHMA (175 aa)) folds into the Thioredoxin domain. Residues cysteine 133, cysteine 137, and histidine 224 each contribute to the Cu cation site. Cysteines 133 and 137 form a disulfide.

Belongs to the SCO1/2 family. Homodimer. Interacts with COA6. Found in a complex with TMEM177, COX20, COA6, MT-CO2/COX2, COX18 and SCO1. Interacts with TMEM177 in a COX20-dependent manner. Interacts with COX20 in a MT-CO2/COX2- and COX18-dependent manner. Interacts with COX16. Ubiquitous.

It localises to the mitochondrion inner membrane. In terms of biological role, copper metallochaperone essential for the synthesis and maturation of cytochrome c oxidase subunit II (MT-CO2/COX2) by facilitating the incorporation of copper into the Cu(A) site of MT-CO2/COX2. Could also act as a thiol-disulfide oxidoreductase to regulate the redox state of the cysteines in SCO1 during maturation of MT-CO2/COX2. This is Protein SCO2 homolog, mitochondrial (SCO2) from Homo sapiens (Human).